A 276-amino-acid chain; its full sequence is 4-deoxy-L-threo-5-hexosulose-uronate ketol-isomerase (276 aa).

Positions 194, 196, 201, and 243 each coordinate Zn(2+).

The protein belongs to the KduI family. Requires Zn(2+) as cofactor.

It carries out the reaction 5-dehydro-4-deoxy-D-glucuronate = 3-deoxy-D-glycero-2,5-hexodiulosonate. It functions in the pathway glycan metabolism; pectin degradation; 2-dehydro-3-deoxy-D-gluconate from pectin: step 4/5. In terms of biological role, catalyzes the isomerization of 5-dehydro-4-deoxy-D-glucuronate to 3-deoxy-D-glycero-2,5-hexodiulosonate. The protein is 4-deoxy-L-threo-5-hexosulose-uronate ketol-isomerase of Lachnoclostridium phytofermentans (strain ATCC 700394 / DSM 18823 / ISDg) (Clostridium phytofermentans).